Here is a 233-residue protein sequence, read N- to C-terminus: MSARENILAKLKKADALPMEEPAVFDYYREMGVSWGSEVERLKHWAAAMRAVKTEIYWVTKSNWMQVFREAAEGKGLKNILLPLATEHGQIARAALADSNIEPIAFEREIDTWKTEFFTNIDAGFSGAQCGIARTGTLMLFSSPEEPRTLSLVPPVHFCLFDTSKMYNEFHNAVEGEKLVENGMPTNVFLISGPSKTADIQLTLAYGAHGPRDLVILAILPDHISPADLEENA.

The protein belongs to the LutC/YkgG family.

This is an uncharacterized protein from Neisseria meningitidis serogroup B (strain ATCC BAA-335 / MC58).